The primary structure comprises 283 residues: Acetyl-coenzyme A carboxylase carboxyl transferase subunit beta (283 aa).

The CoA carboxyltransferase N-terminal domain maps to 29–283 (LWVACPKCQQ…LKLHERGAHY (255 aa)). Positions 33, 36, 51, and 54 each coordinate Zn(2+). The segment at 33 to 54 (CPKCQQSIYHKDLGYYRTCPVC) adopts a C4-type zinc-finger fold.

The protein belongs to the AccD/PCCB family. Acetyl-CoA carboxylase is a heterohexamer composed of biotin carboxyl carrier protein (AccB), biotin carboxylase (AccC) and two subunits each of ACCase subunit alpha (AccA) and ACCase subunit beta (AccD). Requires Zn(2+) as cofactor.

It localises to the cytoplasm. It carries out the reaction N(6)-carboxybiotinyl-L-lysyl-[protein] + acetyl-CoA = N(6)-biotinyl-L-lysyl-[protein] + malonyl-CoA. The protein operates within lipid metabolism; malonyl-CoA biosynthesis; malonyl-CoA from acetyl-CoA: step 1/1. Component of the acetyl coenzyme A carboxylase (ACC) complex. Biotin carboxylase (BC) catalyzes the carboxylation of biotin on its carrier protein (BCCP) and then the CO(2) group is transferred by the transcarboxylase to acetyl-CoA to form malonyl-CoA. The sequence is that of Acetyl-coenzyme A carboxylase carboxyl transferase subunit beta from Latilactobacillus sakei subsp. sakei (strain 23K) (Lactobacillus sakei subsp. sakei).